The chain runs to 449 residues: GTPase Der (449 aa).

2 consecutive EngA-type G domains span residues 2–169 and 180–355; these read FTVA…QLPP and VRFC…EQLT. GTP-binding positions include 8 to 15, 55 to 59, 118 to 121, 186 to 193, 233 to 237, and 298 to 301; these read GRPNVGKS, DTGGL, NKSE, GKPNVGKS, DTAGI, and NKWD. The KH-like domain maps to 356 to 440; it reads KKISTSLLND…PITLYFKSKN (85 aa).

It belongs to the TRAFAC class TrmE-Era-EngA-EngB-Septin-like GTPase superfamily. EngA (Der) GTPase family. Associates with the 50S ribosomal subunit.

GTPase that plays an essential role in the late steps of ribosome biogenesis. This is GTPase Der from Mycoplasma pneumoniae (strain ATCC 29342 / M129 / Subtype 1) (Mycoplasmoides pneumoniae).